A 117-amino-acid chain; its full sequence is Ribonuclease P protein component (117 aa).

Belongs to the RnpA family. In terms of assembly, consists of a catalytic RNA component (M1 or rnpB) and a protein subunit.

The catalysed reaction is Endonucleolytic cleavage of RNA, removing 5'-extranucleotides from tRNA precursor.. RNaseP catalyzes the removal of the 5'-leader sequence from pre-tRNA to produce the mature 5'-terminus. It can also cleave other RNA substrates such as 4.5S RNA. The protein component plays an auxiliary but essential role in vivo by binding to the 5'-leader sequence and broadening the substrate specificity of the ribozyme. This is Ribonuclease P protein component from Thermotoga petrophila (strain ATCC BAA-488 / DSM 13995 / JCM 10881 / RKU-1).